The primary structure comprises 332 residues: Cysteine and histidine-rich domain-containing protein 1 (332 aa).

Ala2 carries the post-translational modification N-acetylalanine. An interaction with PPP5C region spans residues 2 to 77 (ALLCYNRGCG…KPPEPVKPEV (76 aa)). Zn(2+) contacts are provided by Cys5, Cys10, Cys24, His27, Cys42, and Cys43. 2 CHORD domains span residues 5-64 (CYNR…KGRH) and 157-216 (CKNG…TGKH). A Phosphothreonine modification is found at Thr47. Ser51 carries the phosphoserine modification. Zn(2+) contacts are provided by Cys59, His64, Cys157, Cys162, Cys176, His179, Cys194, Cys195, Cys211, and His216. The interval 62-82 (GRHNSEKPPEPVKPEVKTTEK) is disordered. Residues 64–82 (HNSEKPPEPVKPEVKTTEK) show a composition bias toward basic and acidic residues. The interaction with HSP90AA1 and HSP90AB1 stretch occupies residues 65-316 (NSEKPPEPVK…AEPMQWASLE (252 aa)). The CS domain maps to 227–316 (VVPCRHDWHQ…AEPMQWASLE (90 aa)).

Interacts with HSP90AA1, HSP90AB1, PPP5C, ROCK1 and ROCK2.

Functionally, regulates centrosome duplication, probably by inhibiting the kinase activity of ROCK2. Proposed to act as co-chaperone for HSP90. May play a role in the regulation of NOD1 via a HSP90 chaperone complex. In vitro, has intrinsic chaperone activity. This function may be achieved by inhibiting association of ROCK2 with NPM1. Plays a role in ensuring the localization of the tyrosine kinase receptor EGFR to the plasma membrane, and thus ensures the subsequent regulation of EGFR activity and EGF-induced actin cytoskeleton remodeling. Involved in stress response. Prevents tumorigenesis. This Bos taurus (Bovine) protein is Cysteine and histidine-rich domain-containing protein 1 (CHORDC1).